The chain runs to 228 residues: Transcription termination/antitermination protein NusG (228 aa).

This sequence belongs to the NusG family.

Functionally, participates in transcription elongation, termination and antitermination. The chain is Transcription termination/antitermination protein NusG from Mycobacterium leprae (strain TN).